A 31-amino-acid chain; its full sequence is Chassatide C6 (31 aa).

Positions 1-31 (GVIPCGESCVFIPCISSVIGCSCKNKVCYRN) form a cross-link, cyclopeptide (Gly-Asn). Cystine bridges form between Cys5-Cys21, Cys9-Cys23, and Cys14-Cys28.

Post-translationally, this is a cyclic peptide. As to expression, expressed in fruit, pedicel, root and stem but not in leaf (at protein level).

Its function is as follows. Probably participates in a plant defense mechanism. The sequence is that of Chassatide C6 from Chassalia chartacea (Chassalia curviflora).